Consider the following 394-residue polypeptide: Elongation factor Tu (394 aa).

The region spanning 10–205 (KPHMNVGTIG…TMDSYFDLPE (196 aa)) is the tr-type G domain. The segment at 19-26 (GHVDHGKT) is G1. GTP is bound at residue 19 to 26 (GHVDHGKT). Thr26 is a Mg(2+) binding site. A G2 region spans residues 61–65 (GITIN). Residues 82-85 (DCPG) are G3. GTP-binding positions include 82–86 (DCPGH) and 137–140 (NKLD). Residues 137–140 (NKLD) form a G4 region. Residues 173–175 (SAF) form a G5 region.

The protein belongs to the TRAFAC class translation factor GTPase superfamily. Classic translation factor GTPase family. EF-Tu/EF-1A subfamily. Monomer.

It is found in the cytoplasm. It catalyses the reaction GTP + H2O = GDP + phosphate + H(+). GTP hydrolase that promotes the GTP-dependent binding of aminoacyl-tRNA to the A-site of ribosomes during protein biosynthesis. The sequence is that of Elongation factor Tu from Borrelia hermsii (strain HS1 / DAH).